The following is a 103-amino-acid chain: Small ribosomal subunit protein uS10 (103 aa).

This sequence belongs to the universal ribosomal protein uS10 family. As to quaternary structure, part of the 30S ribosomal subunit.

Its function is as follows. Involved in the binding of tRNA to the ribosomes. The protein is Small ribosomal subunit protein uS10 of Cutibacterium acnes (strain DSM 16379 / KPA171202) (Propionibacterium acnes).